The following is a 305-amino-acid chain: Superkiller complex protein 8 (305 aa).

WD repeat units follow at residues 14–57, 62–101, 104–143, 146–187, 188–227, 230–269, and 272–305; these read AHED…LEMQ, GHQL…QIRS, AGPV…KEYS, TRGK…HTLE, GHAM…LAAT, GHGS…CVHT, and DHQD…DCPI.

This sequence belongs to the SKI8 family. As to quaternary structure, component of the PAF1 complex. Component of the SKI complex.

It localises to the nucleus. Its subcellular location is the cytoplasm. In terms of biological role, component of the PAF1 complex (PAF1C) which has multiple functions during transcription by RNA polymerase II and is implicated in regulation of development and maintenance of embryonic stem cell pluripotency. PAF1C associates with RNA polymerase II through interaction with POLR2A CTD non-phosphorylated and 'Ser-2'- and 'Ser-5'-phosphorylated forms and is involved in transcriptional elongation, acting both independently and synergistically with TCEA1 and in cooperation with the DSIF complex and HTATSF1. Also acts as a component of the SKI complex, a multiprotein complex that assists the RNA-degrading exosome during the mRNA decay and quality-control pathways. The SKI complex catalyzes mRNA extraction from 80S ribosomal complexes in the 3'-5' direction and channels mRNA to the cytosolic exosome for degradation. This is Superkiller complex protein 8 (skic8) from Xenopus laevis (African clawed frog).